A 477-amino-acid chain; its full sequence is Ribulose bisphosphate carboxylase large chain (477 aa).

Residues 1–2 constitute a propeptide that is removed on maturation; sequence MS. Residue Pro3 is modified to N-acetylproline. Lys14 carries the post-translational modification N6,N6,N6-trimethyllysine. Substrate is bound by residues Asn123 and Thr173. Lys175 serves as the catalytic Proton acceptor. Lys177 is a substrate binding site. Mg(2+) is bound by residues Lys201, Asp203, and Glu204. Lys201 is subject to N6-carboxylysine. His294 serves as the catalytic Proton acceptor. Residues Arg295, His327, and Ser379 each contribute to the substrate site.

The protein belongs to the RuBisCO large chain family. Type I subfamily. In terms of assembly, heterohexadecamer of 8 large chains and 8 small chains; disulfide-linked. The disulfide link is formed within the large subunit homodimers. It depends on Mg(2+) as a cofactor. The disulfide bond which can form in the large chain dimeric partners within the hexadecamer appears to be associated with oxidative stress and protein turnover.

Its subcellular location is the plastid. The protein localises to the chloroplast. The catalysed reaction is 2 (2R)-3-phosphoglycerate + 2 H(+) = D-ribulose 1,5-bisphosphate + CO2 + H2O. It catalyses the reaction D-ribulose 1,5-bisphosphate + O2 = 2-phosphoglycolate + (2R)-3-phosphoglycerate + 2 H(+). Its function is as follows. RuBisCO catalyzes two reactions: the carboxylation of D-ribulose 1,5-bisphosphate, the primary event in carbon dioxide fixation, as well as the oxidative fragmentation of the pentose substrate in the photorespiration process. Both reactions occur simultaneously and in competition at the same active site. The protein is Ribulose bisphosphate carboxylase large chain of Nicotiana sylvestris (Wood tobacco).